Reading from the N-terminus, the 23-residue chain is Septenin 2c (23 aa).

In terms of tissue distribution, expressed in skin granular glands.

Its subcellular location is the secreted. Functionally, may act as an antimicrobial peptide. This Osteopilus septentrionalis (Cuban treefrog) protein is Septenin 2c.